Here is a 375-residue protein sequence, read N- to C-terminus: Probable pectin lyase C (375 aa).

The first 20 residues, 1-20 (MKITSTIPAVLLGLAPLSAA), serve as a signal peptide directing secretion. Cystine bridges form between C83/C100 and C92/C220. R250 is an active-site residue. A disulfide bridge links C317 with C325.

Belongs to the polysaccharide lyase 1 family.

The protein localises to the secreted. It catalyses the reaction Eliminative cleavage of (1-&gt;4)-alpha-D-galacturonan methyl ester to give oligosaccharides with 4-deoxy-6-O-methyl-alpha-D-galact-4-enuronosyl groups at their non-reducing ends.. In terms of biological role, pectinolytic enzymes consist of four classes of enzymes: pectin lyase, polygalacturonase, pectin methylesterase and rhamnogalacturonase. Among pectinolytic enzymes, pectin lyase is the most important in depolymerization of pectin, since it cleaves internal glycosidic bonds of highly methylated pectins. This is Probable pectin lyase C (pelC) from Aspergillus oryzae (strain ATCC 42149 / RIB 40) (Yellow koji mold).